A 127-amino-acid chain; its full sequence is MAQSVPPGDIQTQPGTKIVFNAPYDDKHTYHIKVINSSARRIGYGIKTTNMKRLGVDPPCGVLDPKEAVLLAVSCDAFAFGQEDTNNDRITVEWTNTPDGAAKQFRREWFQGDGMARRKNLPIEYNP.

Position 2 is an N-acetylalanine (Ala-2). One can recognise an MSP domain in the interval 9 to 126 (DIQTQPGTKI…RRKNLPIEYN (118 aa)).

Sperm.

It localises to the cell projection. It is found in the pseudopodium. The protein resides in the cytoplasm. Its subcellular location is the cytoskeleton. Central component in molecular interactions underlying sperm crawling. Forms an extensive filament system that extends from sperm villipoda, along the leading edge of the pseudopod. The chain is Major sperm protein 77/79 (msp-77) from Caenorhabditis elegans.